A 359-amino-acid polypeptide reads, in one-letter code: UPF0283 membrane protein R01807 (359 aa).

The next 2 helical transmembrane spans lie at 76 to 96 and 109 to 129; these read FGKIAAGAFGILISLAVGLWI and WLGYGAVAVVAIGVIAFLIVV.

Belongs to the UPF0283 family.

It localises to the cell inner membrane. In Rhizobium meliloti (strain 1021) (Ensifer meliloti), this protein is UPF0283 membrane protein R01807.